We begin with the raw amino-acid sequence, 442 residues long: MPDSADTIYALSSGALPAGVAVIRISGAKAFIALRALTGRDLPLPRTASLCSIRNRNNEIIDQSLVIVFPAPNSFTGENCVEIHSHGSRAVMASIFAELDNLGGLRPADAGEFSRRAFENGKMDLLEVEGLADLLQAETEMQRRLAVEQSSGQLSALYDGWANRLTRARALIEAELDFADEEDVPDSVATQVWEAMAALKGEINAHLQGGGNGEIIRDGFKVALVGEPNAGKSTLLNALSGREVAIVTDIAGTTRDVLSVDINLDGYLVRIFDTAGIRETQDVVEREGVRRAVLTAETADLILILQDNDSTPKQSIGSFDNQRSLRVRTKTLLRSRASDDDFDLSISAKEGIGLDELRRALKREIEKRVGSGQTLVPARARHKKRLEETLNYVSDALDSETLDLAIRSEYLRLAATSLGRITGRVDVEDLLGVIFSEFCIGK.

The (6S)-5-formyl-5,6,7,8-tetrahydrofolate site is built by Arg-24, Glu-82, and Lys-122. The TrmE-type G domain occupies 219-366; sequence GFKVALVGEP…LRRALKREIE (148 aa). Position 229 (Asn-229) interacts with K(+). GTP contacts are provided by residues 229–234, 248–254, and 273–276; these read NAGKST, TDIAGTT, and DTAG. Ser-233 lines the Mg(2+) pocket. K(+)-binding residues include Thr-248, Ile-250, and Thr-253. Mg(2+) is bound at residue Thr-254. Lys-442 is a (6S)-5-formyl-5,6,7,8-tetrahydrofolate binding site.

The protein belongs to the TRAFAC class TrmE-Era-EngA-EngB-Septin-like GTPase superfamily. TrmE GTPase family. Homodimer. Heterotetramer of two MnmE and two MnmG subunits. It depends on K(+) as a cofactor.

The protein resides in the cytoplasm. Exhibits a very high intrinsic GTPase hydrolysis rate. Involved in the addition of a carboxymethylaminomethyl (cmnm) group at the wobble position (U34) of certain tRNAs, forming tRNA-cmnm(5)s(2)U34. This chain is tRNA modification GTPase MnmE, found in Agrobacterium fabrum (strain C58 / ATCC 33970) (Agrobacterium tumefaciens (strain C58)).